A 308-amino-acid polypeptide reads, in one-letter code: MTAAAADELHTIIDLIRYGTSRFNEAGLTFGHSYDNALDEATQLVLHSLHLPHDLGPAYGQARLLRAEKERVLALFQRRVDERVPAAYLTGEAWFAGLSFKSDARALVPRSPIAELIEAGFEPWLGGREVTRALDLCTGSGCIAIAMGHYNPHWDVDGVDISDDALALAAENKARLHADNVSLLKSDLFTGLAGRQYDLIVTNPPYVTNDETDALPQEYSYEPELGLRAGDDGLDLVLKILRDAPQHLSEDGLLICEVGESEQHLIKLLPEVDFAWVEFKVGQMGIFAVECRELIAHSARITELASAR.

Belongs to the protein N5-glutamine methyltransferase family. PrmB subfamily.

It catalyses the reaction L-glutaminyl-[ribosomal protein uL3] + S-adenosyl-L-methionine = N(5)-methyl-L-glutaminyl-[ribosomal protein uL3] + S-adenosyl-L-homocysteine + H(+). Functionally, methylates large ribosomal subunit protein uL3 on a specific glutamine residue. The chain is Ribosomal protein uL3 glutamine methyltransferase from Xanthomonas campestris pv. campestris (strain ATCC 33913 / DSM 3586 / NCPPB 528 / LMG 568 / P 25).